The primary structure comprises 1378 residues: DNA-directed RNA polymerase subunit beta (1378 aa).

It belongs to the RNA polymerase beta chain family. As to quaternary structure, the RNAP catalytic core consists of 2 alpha, 1 beta, 1 beta' and 1 omega subunit. When a sigma factor is associated with the core the holoenzyme is formed, which can initiate transcription.

The enzyme catalyses RNA(n) + a ribonucleoside 5'-triphosphate = RNA(n+1) + diphosphate. Its function is as follows. DNA-dependent RNA polymerase catalyzes the transcription of DNA into RNA using the four ribonucleoside triphosphates as substrates. This chain is DNA-directed RNA polymerase subunit beta, found in Roseobacter denitrificans (strain ATCC 33942 / OCh 114) (Erythrobacter sp. (strain OCh 114)).